We begin with the raw amino-acid sequence, 391 residues long: Formate-dependent phosphoribosylglycinamide formyltransferase (391 aa).

Residues 20 to 21 and E80 each bind N(1)-(5-phospho-beta-D-ribosyl)glycinamide; that span reads EL. Residues R112, K153, 158–163, 193–196, and E201 each bind ATP; these read SSGKGQ and EGFI. Residues 117–306 form the ATP-grasp domain; it reads RLAAETLGLP…EFALHVRAIL (190 aa). Mg(2+) contacts are provided by E265 and E277. Residues D284, K354, and 361–362 contribute to the N(1)-(5-phospho-beta-D-ribosyl)glycinamide site; that span reads RR.

It belongs to the PurK/PurT family. As to quaternary structure, homodimer.

The catalysed reaction is N(1)-(5-phospho-beta-D-ribosyl)glycinamide + formate + ATP = N(2)-formyl-N(1)-(5-phospho-beta-D-ribosyl)glycinamide + ADP + phosphate + H(+). The protein operates within purine metabolism; IMP biosynthesis via de novo pathway; N(2)-formyl-N(1)-(5-phospho-D-ribosyl)glycinamide from N(1)-(5-phospho-D-ribosyl)glycinamide (formate route): step 1/1. Its function is as follows. Involved in the de novo purine biosynthesis. Catalyzes the transfer of formate to 5-phospho-ribosyl-glycinamide (GAR), producing 5-phospho-ribosyl-N-formylglycinamide (FGAR). Formate is provided by PurU via hydrolysis of 10-formyl-tetrahydrofolate. This chain is Formate-dependent phosphoribosylglycinamide formyltransferase, found in Shewanella sp. (strain MR-7).